The sequence spans 481 residues: CUGBP Elav-like family member 6 (481 aa).

The span at 1–12 (MAAAPGGSAQPA) shows a compositional bias: low complexity. Residues 1–34 (MAAAPGGSAQPAGPGPRLGFSTADSGVGMSGLNP) are disordered. 3 RRM domains span residues 46–127 (IKLF…PAAS), 134–214 (RKLF…LADT), and 396–474 (CNLF…LKRP).

This sequence belongs to the CELF/BRUNOL family. Expressed mainly in kidney, brain and testis and present in other tissues albeit at lower levels. Also expressed in fetal kidney.

It is found in the nucleus. Its subcellular location is the cytoplasm. Functionally, RNA-binding protein implicated in the regulation of pre-mRNA alternative splicing. Mediates exon inclusion and/or exclusion in pre-mRNA that are subject to tissue-specific and developmentally regulated alternative splicing. Specifically activates exon 5 inclusion of TNNT2 in a muscle-specific splicing enhancer (MSE)-dependent manner. Promotes also exon exclusion of INSR pre-mRNA. This chain is CUGBP Elav-like family member 6 (CELF6), found in Homo sapiens (Human).